The chain runs to 693 residues: Elongation factor G (693 aa).

Residues 8 to 282 (EKTRNIGIMA…AVIDYLPSPL (275 aa)) enclose the tr-type G domain. Residues 17–24 (AHIDAGKT), 81–85 (DTPGH), and 135–138 (NKMD) contribute to the GTP site.

The protein belongs to the TRAFAC class translation factor GTPase superfamily. Classic translation factor GTPase family. EF-G/EF-2 subfamily.

Its subcellular location is the cytoplasm. In terms of biological role, catalyzes the GTP-dependent ribosomal translocation step during translation elongation. During this step, the ribosome changes from the pre-translocational (PRE) to the post-translocational (POST) state as the newly formed A-site-bound peptidyl-tRNA and P-site-bound deacylated tRNA move to the P and E sites, respectively. Catalyzes the coordinated movement of the two tRNA molecules, the mRNA and conformational changes in the ribosome. This is Elongation factor G from Staphylococcus carnosus (strain TM300).